Consider the following 452-residue polypeptide: UPF0761 membrane protein Bpet3042 (452 aa).

6 helical membrane-spanning segments follow: residues 56-76 (VLGIVPMLAVVLSLFTAFPVF), 114-134 (LTAIGGAFLVVTSLLLIMTID), 153-173 (ALVYWAVVTLGPVVAGASLWA), 195-215 (AISFLPLILTGLGFAALFVVV), 225-245 (ALVGGFGTAIVLELMKAAFAY), and 259-279 (AFATLPIFLLWIYLSWLAVLF).

This sequence belongs to the UPF0761 family.

It is found in the cell inner membrane. This is UPF0761 membrane protein Bpet3042 from Bordetella petrii (strain ATCC BAA-461 / DSM 12804 / CCUG 43448).